Reading from the N-terminus, the 375-residue chain is Alanine racemase (375 aa).

Residue K35 is the Proton acceptor; specific for D-alanine of the active site. N6-(pyridoxal phosphate)lysine is present on K35. Substrate is bound at residue R130. Y253 (proton acceptor; specific for L-alanine) is an active-site residue. M305 contacts substrate.

This sequence belongs to the alanine racemase family. It depends on pyridoxal 5'-phosphate as a cofactor.

It carries out the reaction L-alanine = D-alanine. It participates in amino-acid biosynthesis; D-alanine biosynthesis; D-alanine from L-alanine: step 1/1. Functionally, catalyzes the interconversion of L-alanine and D-alanine. May also act on other amino acids. This is Alanine racemase (alr) from Ralstonia nicotianae (strain ATCC BAA-1114 / GMI1000) (Ralstonia solanacearum).